The primary structure comprises 225 residues: Protein-L-isoaspartate O-methyltransferase (225 aa).

The active site involves Ser63.

It belongs to the methyltransferase superfamily. L-isoaspartyl/D-aspartyl protein methyltransferase family.

It is found in the cytoplasm. The enzyme catalyses [protein]-L-isoaspartate + S-adenosyl-L-methionine = [protein]-L-isoaspartate alpha-methyl ester + S-adenosyl-L-homocysteine. Catalyzes the methyl esterification of L-isoaspartyl residues in peptides and proteins that result from spontaneous decomposition of normal L-aspartyl and L-asparaginyl residues. It plays a role in the repair and/or degradation of damaged proteins. This Staphylothermus marinus (strain ATCC 43588 / DSM 3639 / JCM 9404 / F1) protein is Protein-L-isoaspartate O-methyltransferase.